The sequence spans 725 residues: RNA-directed RNA polymerase (725 aa).

Residues 424–544 (PVGIGMDASR…VVERSDEKKV (121 aa)) enclose the RdRp catalytic domain.

This sequence belongs to the tombusviridae RNA polymerase family.

The catalysed reaction is RNA(n) + a ribonucleoside 5'-triphosphate = RNA(n+1) + diphosphate. Functionally, RNA-dependent RNA polymerase that plays an essential role in the virus replication. This chain is RNA-directed RNA polymerase, found in Chenopodium amaranticolor (Quinoa).